The following is a 330-amino-acid chain: Clavaminate synthase-like protein At3g21360 (330 aa).

The residue at position 2 (A2) is an N-acetylalanine. Residues H120, E122, and H313 each contribute to the Fe cation site.

Requires Fe cation as cofactor.

The protein is Clavaminate synthase-like protein At3g21360 of Arabidopsis thaliana (Mouse-ear cress).